A 414-amino-acid polypeptide reads, in one-letter code: tRNA (guanine-N(7)-)-methyltransferase non-catalytic subunit WDR4 (414 aa).

N-acetylalanine is present on Ala2. WD repeat units lie at residues 60-99 (QGSDTVLASTFSKSGSYFVLTDDSKRLILFRTNPWQCLSV), 101-140 (TVVRRCTALTFTASEEKILVADKSGDVYSFSVLEPHGGGR), 144-184 (GHLS…IESF), and 187-227 (GHTE…ELHC). Residues 377–414 (EERLQQQLEKKRRQAPPPGPNGPTKKMRAGELAQGCSS) form a disordered region.

The protein belongs to the WD repeat TRM82 family. As to quaternary structure, non-catalytic component of the METTL1-WDR4 complex, composed of METTL1 and WDR4. Interacts with FEN1; the interaction is direct.

Its subcellular location is the nucleus. It localises to the chromosome. Its pathway is tRNA modification; N(7)-methylguanine-tRNA biosynthesis. Non-catalytic component of the METTL1-WDR4 methyltransferase complex required for the formation of N(7)-methylguanine in a subset of RNA species, such as tRNAs, mRNAs and microRNAs (miRNAs). In the METTL1-WDR4 methyltransferase complex, WDR4 acts as a scaffold for tRNA-binding. Required for the formation of N(7)-methylguanine at position 46 (m7G46) in a large subset of tRNAs that contain the 5'-RAGGU-3' motif within the variable loop. M7G46 interacts with C13-G22 in the D-loop to stabilize tRNA tertiary structure and protect tRNAs from decay. Also required for the formation of N(7)-methylguanine at internal sites in a subset of mRNAs. Also required for methylation of a specific subset of miRNAs, such as let-7. Independently of METTL1, also plays a role in genome stability: localizes at the DNA replication site and regulates endonucleolytic activities of FEN1. In Bos taurus (Bovine), this protein is tRNA (guanine-N(7)-)-methyltransferase non-catalytic subunit WDR4.